A 397-amino-acid polypeptide reads, in one-letter code: ATP-dependent RNA helicase RhlB (397 aa).

The short motif at 9-37 (TRFHDFNLAPSLMHAIHDLGFPYCTPIQA) is the Q motif element. Positions 40-220 (LGFTLRGQDA…KQWTVDPAIV (181 aa)) constitute a Helicase ATP-binding domain. Residue 53–60 (AQTGTGKT) coordinates ATP. A DEAD box motif is present at residues 166 to 169 (DEAD). Positions 243–393 (DKYKLLYNLV…MPPAELLKPV (151 aa)) constitute a Helicase C-terminal domain.

This sequence belongs to the DEAD box helicase family. RhlB subfamily. As to quaternary structure, component of the RNA degradosome, which is a multiprotein complex involved in RNA processing and mRNA degradation.

The protein localises to the cytoplasm. It carries out the reaction ATP + H2O = ADP + phosphate + H(+). DEAD-box RNA helicase involved in RNA degradation. Has RNA-dependent ATPase activity and unwinds double-stranded RNA. In Pseudomonas aeruginosa (strain UCBPP-PA14), this protein is ATP-dependent RNA helicase RhlB.